A 228-amino-acid chain; its full sequence is UPF0502 protein Rfer_1648 (228 aa).

It belongs to the UPF0502 family.

The chain is UPF0502 protein Rfer_1648 from Albidiferax ferrireducens (strain ATCC BAA-621 / DSM 15236 / T118) (Rhodoferax ferrireducens).